The primary structure comprises 313 residues: MNKLVDAHCHVITDPDNTFCGDDGGSQGTLRCVMSSNPYDWNNLKKLAGRSTSKNDICVGFGVHPWYSHLFYVGSRRDKVSHYQDVLEYKNEEQFDSLVQVLPEPLDLEEYIKREFNDTLVSVIGEIGLDKLFRLPANGFYMQNEKARLTTVKVKLSHQETVFRRFCRLARHTSKPISIHDVKCHGKLNDICNEELLTYHSVKICLHSYTGSKETLLGQWLKKFPPDRIFVSLSKWINFKDPEEGDALVRSLPSTCILTETDYPIDNPDPSYQKALTEQLQYLNAQIARAWDETLDASQAALRVYENFQKFIK.

6 residues coordinate a divalent metal cation: His8, His10, Glu126, His180, His207, and Asp262.

This sequence belongs to the metallo-dependent hydrolases superfamily. TatD-type hydrolase family. The cofactor is a divalent metal cation.

Functionally, putative deoxyribonuclease. This is an uncharacterized protein from Saccharomyces cerevisiae (strain ATCC 204508 / S288c) (Baker's yeast).